Here is a 552-residue protein sequence, read N- to C-terminus: Acyl-CoA synthetase FUM10 (552 aa).

Residue Glu183–Lys194 participates in AMP binding. Positions Glu463–Lys536 are AMP-binding.

Belongs to the ATP-dependent AMP-binding enzyme family.

The protein operates within mycotoxin biosynthesis. Its function is as follows. Acyl-CoA synthetase; part of the gene cluster that mediates the biosynthesis of fumonisins B1 (FB1), B2 (FB2), B3 (FB3), and B4 (FB4), which are carcinogenic mycotoxins. Within the pathway, FUM10 is involved the addition of the tricarballylic moieties to the carbon backbone. FUM10 catalyzes the CoA activation of citrate to form tricarballylic acid. The biosynthesis starts with the FUM1-catalyzed carbon chain assembly from one molecule of acetyl-CoA, eight molecules of malonyl-CoA, and two molecules of methionine (in S-adenosyl form). The C18 polyketide chain is released from the enzyme by a nucleophilic attack of a carbanion, which is derived from R-carbon of alanine by decarboxylation, on the carbonyl carbon of polyketide acyl chain. This step is catalyzed by the pyridoxal 5'-phosphate-dependent aminoacyl transferase FUM8. The resultant 3-keto intermediate is then stereospecifically reduced to a 3-hydroxyl product by reductase FUM13. Subsequent oxidations at C-10 by the cytochrome P450 monooxygenase FUM2, C-14 and C-15 by FUM6, FUM12 or FUM15, tricarballylic esterification of the hydroxyl groups on C-14 and C-15 by acyltransferase FUM14, and C-5 hydroxylation by 2-keto-glutarate-dependent dioxygenase FUM3 furnish the biosynthesis of fumonisins. The tricarballylic moieties are most likely derived from the citric acid cycle, and their addition to the carbon backbone may involve FUM7, FUM10, FUM11 and FUM14. The sequence is that of Acyl-CoA synthetase FUM10 from Gibberella moniliformis (strain M3125 / FGSC 7600) (Maize ear and stalk rot fungus).